We begin with the raw amino-acid sequence, 337 residues long: Phenylalanine--tRNA ligase alpha subunit (337 aa).

Position 252 (Glu252) interacts with Mg(2+).

The protein belongs to the class-II aminoacyl-tRNA synthetase family. Phe-tRNA synthetase alpha subunit type 1 subfamily. In terms of assembly, tetramer of two alpha and two beta subunits. Requires Mg(2+) as cofactor.

Its subcellular location is the cytoplasm. The enzyme catalyses tRNA(Phe) + L-phenylalanine + ATP = L-phenylalanyl-tRNA(Phe) + AMP + diphosphate + H(+). The sequence is that of Phenylalanine--tRNA ligase alpha subunit from Francisella tularensis subsp. tularensis (strain SCHU S4 / Schu 4).